We begin with the raw amino-acid sequence, 422 residues long: Serine--tRNA ligase (422 aa).

227 to 229 (TSE) contacts L-serine. Residues 258 to 260 (RRE) and V274 contribute to the ATP site. Residue E281 coordinates L-serine. An ATP-binding site is contributed by 345-348 (ELTS). T380 lines the L-serine pocket.

This sequence belongs to the class-II aminoacyl-tRNA synthetase family. Type-1 seryl-tRNA synthetase subfamily. In terms of assembly, homodimer. The tRNA molecule binds across the dimer.

It localises to the cytoplasm. It carries out the reaction tRNA(Ser) + L-serine + ATP = L-seryl-tRNA(Ser) + AMP + diphosphate + H(+). It catalyses the reaction tRNA(Sec) + L-serine + ATP = L-seryl-tRNA(Sec) + AMP + diphosphate + H(+). It participates in aminoacyl-tRNA biosynthesis; selenocysteinyl-tRNA(Sec) biosynthesis; L-seryl-tRNA(Sec) from L-serine and tRNA(Sec): step 1/1. Functionally, catalyzes the attachment of serine to tRNA(Ser). Is also able to aminoacylate tRNA(Sec) with serine, to form the misacylated tRNA L-seryl-tRNA(Sec), which will be further converted into selenocysteinyl-tRNA(Sec). The protein is Serine--tRNA ligase of Thermobifida fusca (strain YX).